The primary structure comprises 104 residues: Large ribosomal subunit protein eL31 (104 aa).

The protein belongs to the eukaryotic ribosomal protein eL31 family.

In Aeropyrum pernix (strain ATCC 700893 / DSM 11879 / JCM 9820 / NBRC 100138 / K1), this protein is Large ribosomal subunit protein eL31 (rpl31e).